A 176-amino-acid polypeptide reads, in one-letter code: Lipocalin-1 (176 aa).

An N-terminal signal peptide occupies residues 1–19 (MMRALLLAIGLGLVAALQA). A disulfide bond links Cys80 and Cys171.

It belongs to the calycin superfamily. Lipocalin family. In terms of assembly, predominantly monomer. May form homodimer. Interacts with LMBR1L; this interaction mediates the endocytosis of LCN1.

It is found in the secreted. Could play a role in taste reception. Could be necessary for the concentration and delivery of sapid molecules in the gustatory system. Can bind various ligands, with chemical structures ranging from lipids and retinoids to the macrocyclic antibiotic rifampicin and even to microbial siderophores. Exhibits an extremely wide ligand pocket. The chain is Lipocalin-1 (LCN1) from Sus scrofa (Pig).